The sequence spans 503 residues: MYVMKVVGKTTTTHFTFESLEKIRFGEYVIAKNVDGRDVLGVIKNVVADVEKFVGEVKVIGVLDGNKIIPNRTPILPNSEVRLCDDEILNNIYLTPDGLNIGHLLTRDNVRVYLDTNKLVSRHFAILSITGGGKSNTASVLCRELAKKNGTVIMIDPHGEYISLYHEDMEGKIKVINPIINPVLLAPSEFANLIGIGDNEIEKRVYVEFAYHTVKHECPDAKGIEFIEKIENLLYEWSKIASVGWEIKYYNPLRRNYDRRKLEKEDFVILMSLIDTISKFKLDYALNIGDRDVIEEFEIGKINIVNLSGLEIPQMVTFVGFIAKHLLLKRITYLKSLKDVYSINEEIRRVAQSNLNIIESHYKVVTKPVLLIVEEAHIFIPVNEQNSASLWLGKIAREGRKFGVGLGLVSQRPKQLHPDVLSQTNTKIILKIVEPEDQKYIQRASEELGEDLVKDLASLGIGEAVIVGAAISLPSIVKIDKFDGVYGGKDINIVGEWMGLDDW.

Residues R122, 131–136, and 478–479 each bind ATP; these read GGGKSN and KI.

This sequence belongs to the HerA family.

It carries out the reaction Couples ATP hydrolysis with the unwinding of duplex DNA at the replication fork by translocating in the 5'-3' direction. This creates two antiparallel DNA single strands (ssDNA). The leading ssDNA polymer is the template for DNA polymerase III holoenzyme which synthesizes a continuous strand.. It catalyses the reaction ATP + H2O = ADP + phosphate + H(+). The enzyme catalyses Couples ATP hydrolysis with the unwinding of duplex DNA by translocating in the 3'-5' direction.. Involved in DNA double-strand break (DSB) repair. Probably acts with NurA to stimulate resection of the 5' strand and produce the long 3' single-strand that is required for RadA loading. Has DNA-dependent ATPase activity and DNA helicase activity. This is Probable DNA double-strand break repair helicase HerA from Methanocaldococcus jannaschii (strain ATCC 43067 / DSM 2661 / JAL-1 / JCM 10045 / NBRC 100440) (Methanococcus jannaschii).